Consider the following 228-residue polypeptide: AA9 family lytic polysaccharide monooxygenase A (228 aa).

Positions 1 and 86 each coordinate Cu(2+). Position 1 is a methylhistidine (histidine 1). Disulfide bonds link cysteine 56–cysteine 178 and cysteine 97–cysteine 101. The N-linked (GlcNAc...) asparagine glycan is linked to asparagine 138. O2 is bound by residues histidine 164 and glutamine 173. Tyrosine 175 contributes to the Cu(2+) binding site.

It belongs to the polysaccharide monooxygenase AA9 family. Requires Cu(2+) as cofactor. In terms of processing, the catalytically essential N-terminal histidine His-22 is post-translationally modified by methylation to prevent protonation of the histidine side chain, and protect the critical active site of the enzyme from oxidative damage.

It localises to the secreted. It carries out the reaction [(1-&gt;4)-beta-D-glucosyl]n+m + reduced acceptor + O2 = 4-dehydro-beta-D-glucosyl-[(1-&gt;4)-beta-D-glucosyl]n-1 + [(1-&gt;4)-beta-D-glucosyl]m + acceptor + H2O.. Small amounts of H(2)O(2) boost LPMO activity, while higher amounts lead to inactivation of the enzyme. Lytic polysaccharide monooxygenase (LPMO) that depolymerizes crystalline and amorphous polysaccharides via the oxidation of scissile alpha- or beta-(1-4)-glycosidic bonds, yielding C1 and C4 oxidation product. Catalysis by LPMOs requires the reduction of the active-site copper from Cu(II) to Cu(I) by a reducing agent and H(2)O(2) or O(2) as a cosubstrate. Is able to cleave cellulose and xylan to produce C1- and C4-oxidized products. The polypeptide is AA9 family lytic polysaccharide monooxygenase A (Thermoascus aurantiacus).